Reading from the N-terminus, the 255-residue chain is Reticulon-like protein B3 (255 aa).

The span at 1 to 25 (MAEEHKHEESIMEKISEKIHGHDDS) shows a compositional bias: basic and acidic residues. Positions 1-38 (MAEEHKHEESIMEKISEKIHGHDDSSSSSSDSDDDKNS) are disordered. At A2 the chain carries N-acetylalanine. One can recognise a Reticulon domain in the interval 64-255 (PADIFLWRNK…GAFAFIKKKD (192 aa)). The next 3 helical transmembrane spans lie at 75–95 (VSGG…LLEY), 97–117 (LLTL…LWSS), and 186–206 (CNFL…PVLY).

The protein localises to the endoplasmic reticulum membrane. Its subcellular location is the vacuole membrane. This Arabidopsis thaliana (Mouse-ear cress) protein is Reticulon-like protein B3 (RTNLB3).